Consider the following 450-residue polypeptide: Grayanic acid biosynthesis cluster O-methyltransferase (450 aa).

Residue Asp254 participates in S-adenosyl-L-methionine binding. The Proton acceptor role is filled by His301.

Belongs to the class I-like SAM-binding methyltransferase superfamily. Cation-independent O-methyltransferase family. COMT subfamily.

It functions in the pathway secondary metabolite biosynthesis. In terms of biological role, non-reducing polyketide synthase; part of the gene cluster that mediates the biosynthesis of orcinol depsidone grayanic acid (GRA), the only major secondary metabolite known in C.grayi. The first step consists in the ring and depside synthesis by PKS16 leading to 4-O-demethylsphaerophorin, involving different orcinol-like rings, one with acetyl CoA and the other with octanoyl CoA as the starter. Further depsidone formation by the GRA cluster-specific cytochrome P450 leads to 4-O-demethylgrayanic acid. Finally, the cluster specific O-methyltransferase probably converts the 4-O-demethylgrayanic acid into grayanic acid. The chain is Grayanic acid biosynthesis cluster O-methyltransferase from Cladonia grayi (Gray's cup lichen).